The chain runs to 614 residues: Protein NRT1/ PTR FAMILY 7.3 (614 aa).

Helical transmembrane passes span 41–61 (WVAGIVILLNQGLATLAFFGV) and 87–107 (WTGTVYIFSLVGAFLSDSYWG). Thr111 bears the Phosphothreonine mark. Transmembrane regions (helical) follow at residues 114–134 (IFQVIFVIGLSSLSLSSYMFL), 152–172 (MMEITMFYFSIYLIALGYGGY), 196–216 (IAFFSYFYLALNLGSLFSNTI), 226–246 (WALGFWASTGSAIIGLILFLV), 355–375 (PIWLCTIIYSVVFTQMASLFV), 390–410 (IPPASMSSFDILSVALFIFLY), 435–455 (MGIGLVIAVIAMIAAGIVECY), 515–535 (LCMMSMSMGNFVSSLLVTMVV), and 559–579 (FYFLLAALTSIDLVVYIACAK). The segment at 592–614 (MQDMSDDDYDTESEEEREKDSKV) is disordered. The span at 593 to 606 (QDMSDDDYDTESEE) shows a compositional bias: acidic residues.

The protein belongs to the major facilitator superfamily. Proton-dependent oligopeptide transporter (POT/PTR) (TC 2.A.17) family. In terms of tissue distribution, high expression in roots. Barely detected in shoots. Expressed in root pericycle cells close to the xylem.

It is found in the cell membrane. Functionally, low-affinity proton-dependent bidirectional nitrate transporter. Involved in nitrate loading into xylem and not in nitrate uptake. Not involved in histidine or dipeptides transport. The polypeptide is Protein NRT1/ PTR FAMILY 7.3 (NPF7.3) (Arabidopsis thaliana (Mouse-ear cress)).